The chain runs to 116 residues: Ribonuclease P protein component (116 aa).

Belongs to the RnpA family. As to quaternary structure, consists of a catalytic RNA component (M1 or rnpB) and a protein subunit.

It carries out the reaction Endonucleolytic cleavage of RNA, removing 5'-extranucleotides from tRNA precursor.. Functionally, RNaseP catalyzes the removal of the 5'-leader sequence from pre-tRNA to produce the mature 5'-terminus. It can also cleave other RNA substrates such as 4.5S RNA. The protein component plays an auxiliary but essential role in vivo by binding to the 5'-leader sequence and broadening the substrate specificity of the ribozyme. This chain is Ribonuclease P protein component, found in Bacillus velezensis (strain DSM 23117 / BGSC 10A6 / LMG 26770 / FZB42) (Bacillus amyloliquefaciens subsp. plantarum).